Here is a 108-residue protein sequence, read N- to C-terminus: Putative transmembrane protein ORF108 (108 aa).

3 helical membrane-spanning segments follow: residues 11–31, 33–53, and 69–89; these read FIMG…SSII, IAMT…TVHF, and VGFL…LLII.

Its subcellular location is the host membrane. This is Putative transmembrane protein ORF108 from Acidianus hospitalis (AFV-1).